We begin with the raw amino-acid sequence, 541 residues long: Kinesin light chain 1 (541 aa).

Positions 27–156 form a coiled coil; it reads KTKQVIQGLE…HLEFMNQLKK (130 aa). Basic and acidic residues predominate over residues 156–176; that stretch reads KYDDDISPSEDKDSDSSKEPL. Positions 156–201 are disordered; it reads KYDDDISPSEDKDSDSSKEPLDDLFPNDEDEPGQGIQHSDSSAAAA. Ser-162 carries the phosphoserine modification. TPR repeat units follow at residues 211 to 244, 253 to 286, 295 to 328, 337 to 370, and 380 to 413; these read LRTL…LEKT, ATML…REKT, AATL…REKV, AKQL…YQTK, and AKTK…AHEA. Tyr-448 carries the phosphotyrosine modification. Ser-459 carries the post-translational modification Phosphoserine. A TPR 6 repeat occupies 463 to 496; it reads TTTLKNLGALYRRQGKFEAAETLEEAAMRSRKQG. A disordered region spans residues 493–541; it reads RKQGLDNVHKQRVAEVLNDPESMEKRRSRESLNMDVVKYESGPDGGEEA. Basic and acidic residues-rich tracts occupy residues 495–505 and 514–524; these read QGLDNVHKQRV and SMEKRRSRESL. Phosphoserine; by AMPK is present on residues Ser-520 and Ser-523.

The protein belongs to the kinesin light chain family. Oligomeric complex composed of two heavy chains and two light chains. Interacts with SPAG9. Interacts with ATCAY; may link mitochondria to KLC1 and regulate mitochondria localization into neuron projections. Interacts (via TPR repeats) with TOR1A; the interaction associates TOR1A with the kinesin oligomeric complex. Interacts with BORCS5. Interacts with MAPK8IP3/JIP3 and NTRK2/TRKB; interaction with NTRK2/TRKB is mediated by MAPK8IP3/JIP3. Interacts with CLSTN1; phosphorylation at Ser-459 inhibits interaction with CLSTN1. Post-translationally, phosphorylation at Ser-459 by ERK inhibits interaction with CLSTN1 and localization to cytoplasmic vesicles.

It is found in the cell projection. The protein resides in the growth cone. Its subcellular location is the cytoplasmic vesicle. The protein localises to the cytoplasm. It localises to the cytoskeleton. Its function is as follows. Kinesin is a microtubule-associated force-producing protein that may play a role in organelle transport. The light chain may function in coupling of cargo to the heavy chain or in the modulation of its ATPase activity. The chain is Kinesin light chain 1 (Klc1) from Mus musculus (Mouse).